The sequence spans 129 residues: Small ribosomal subunit protein uS11 (129 aa).

As to quaternary structure, part of the 30S ribosomal subunit. Interacts with proteins S7 and S18. Binds to IF-3. Post-translationally, may be methylated on an undetermined residue.

In terms of biological role, located on the platform of the 30S subunit, it bridges several disparate RNA helices of the 16S rRNA. Forms part of the Shine-Dalgarno cleft in the 70S ribosome. The polypeptide is Small ribosomal subunit protein uS11 (Rhodopseudomonas palustris (strain ATCC BAA-98 / CGA009)).